Reading from the N-terminus, the 351-residue chain is DNA polymerase IV (351 aa).

Residues I4 to G185 enclose the UmuC domain. 2 residues coordinate Mg(2+): D8 and D103. Residue E104 is part of the active site.

It belongs to the DNA polymerase type-Y family. In terms of assembly, monomer. It depends on Mg(2+) as a cofactor.

It is found in the cytoplasm. It catalyses the reaction DNA(n) + a 2'-deoxyribonucleoside 5'-triphosphate = DNA(n+1) + diphosphate. Its function is as follows. Poorly processive, error-prone DNA polymerase involved in untargeted mutagenesis. Copies undamaged DNA at stalled replication forks, which arise in vivo from mismatched or misaligned primer ends. These misaligned primers can be extended by PolIV. Exhibits no 3'-5' exonuclease (proofreading) activity. May be involved in translesional synthesis, in conjunction with the beta clamp from PolIII. The polypeptide is DNA polymerase IV (Escherichia coli O9:H4 (strain HS)).